A 636-amino-acid chain; its full sequence is Plasma kallikrein (636 aa).

The N-terminal stretch at 1–19 (MIALRQAAYFICLFATVSC) is a signal peptide. 4 consecutive Apple domains span residues 21–104 (CLTQ…LKRC), 111–194 (CHRS…LKAC), 201–284 (CRVD…LLTC), and 294–377 (CHSK…LRLC). Cystine bridges form between cysteine 21–cysteine 104, cysteine 47–cysteine 77, cysteine 51–cysteine 57, cysteine 111–cysteine 194, cysteine 137–cysteine 166, cysteine 141–cysteine 147, cysteine 201–cysteine 284, cysteine 227–cysteine 256, cysteine 231–cysteine 237, cysteine 294–cysteine 377, cysteine 320–cysteine 349, and cysteine 324–cysteine 330. N-linked (GlcNAc...) asparagine glycans are attached at residues asparagine 66 and asparagine 127. N-linked (GlcNAc...) asparagine glycans are attached at residues asparagine 361 and asparagine 397. One can recognise a Peptidase S1 domain in the interval 392–627 (IVGGTNASWG…YVDWILEKTQ (236 aa)). Cysteine 420 and cysteine 436 form a disulfide bridge. The active-site Charge relay system is the histidine 435. A glycan (N-linked (GlcNAc...) asparagine) is linked at asparagine 454. Aspartate 484 (charge relay system) is an active-site residue. N-linked (GlcNAc...) asparagine glycosylation is present at asparagine 495. 3 cysteine pairs are disulfide-bonded: cysteine 518–cysteine 585, cysteine 549–cysteine 564, and cysteine 575–cysteine 603. The active-site Charge relay system is serine 579.

It belongs to the peptidase S1 family. Plasma kallikrein subfamily. As to quaternary structure, forms a heterodimer with SERPINA5. The zymogen is activated by factor XIIa, which cleaves the molecule into a light chain, which contains the active site, and a heavy chain, which associates with HMW kininogen. These chains are linked by one or more disulfide bonds.

It localises to the secreted. It carries out the reaction Cleaves selectively Arg-|-Xaa and Lys-|-Xaa bonds, including Lys-|-Arg and Arg-|-Ser bonds in (human) kininogen to release bradykinin.. Its activity is regulated as follows. Inhibited by SERPINA5. In terms of biological role, the enzyme cleaves Lys-Arg and Arg-Ser bonds. It activates, in a reciprocal reaction, factor XII after its binding to a negatively charged surface. It also releases bradykinin from HMW kininogen and may also play a role in the renin-angiotensin system by converting prorenin into renin. The sequence is that of Plasma kallikrein (KLKB1) from Bos taurus (Bovine).